The sequence spans 130 residues: MVSRDFGREKRLLIPRQFKAVFDSPTAKVPGKHVLLLARPNALDHPRLGLVIGKKSVKLSVGRNRLKRLIRESFRLNQDSLAGWDIVVVARKGLGELENTEVTQQFGKLWKRLARSRPQTAVEAAGSSHA.

The protein belongs to the RnpA family. Consists of a catalytic RNA component (M1 or rnpB) and a protein subunit.

It catalyses the reaction Endonucleolytic cleavage of RNA, removing 5'-extranucleotides from tRNA precursor.. In terms of biological role, RNaseP catalyzes the removal of the 5'-leader sequence from pre-tRNA to produce the mature 5'-terminus. It can also cleave other RNA substrates such as 4.5S RNA. The protein component plays an auxiliary but essential role in vivo by binding to the 5'-leader sequence and broadening the substrate specificity of the ribozyme. The protein is Ribonuclease P protein component of Azotobacter vinelandii (strain DJ / ATCC BAA-1303).